Consider the following 291-residue polypeptide: uncharacterized protein (291 aa).

Solcar repeat units lie at residues Pro15–Ser93, Pro104–Ser190, and Leu201–Ile287. 6 helical membrane-spanning segments follow: residues Ile21–Ala41, Ser70–Ile90, Leu108–Ile128, Thr169–Gln189, Leu201–Thr221, and Phe259–Val280.

This sequence belongs to the mitochondrial carrier (TC 2.A.29) family.

The protein localises to the mitochondrion inner membrane. This is an uncharacterized protein from Schizosaccharomyces pombe (strain 972 / ATCC 24843) (Fission yeast).